The following is a 367-amino-acid chain: D-alanine--D-alanine ligase (367 aa).

One can recognise an ATP-grasp domain in the interval 150 to 357; the sequence is KKLLTAAGLP…YPTLLATMVE (208 aa). ATP is bound at residue 178 to 233; that stretch reads RERLGLPVFVKPSRGGSSIGVSRVTAWDALPAAIELARRHDPKVIVEAAIPGRELE. Residues D312, E324, and N326 each contribute to the Mg(2+) site.

This sequence belongs to the D-alanine--D-alanine ligase family. The cofactor is Mg(2+). Mn(2+) is required as a cofactor.

The protein resides in the cytoplasm. It carries out the reaction 2 D-alanine + ATP = D-alanyl-D-alanine + ADP + phosphate + H(+). Its pathway is cell wall biogenesis; peptidoglycan biosynthesis. Functionally, cell wall formation. The protein is D-alanine--D-alanine ligase of Mycolicibacterium vanbaalenii (strain DSM 7251 / JCM 13017 / BCRC 16820 / KCTC 9966 / NRRL B-24157 / PYR-1) (Mycobacterium vanbaalenii).